The sequence spans 304 residues: MRHFLTLDDFSKDEILQMINLAGKIKKEAKVREFKPYLKDQTLAMIFEKSSTRTRVSFEVGMYQLGGHALFLSANDLQIGRGEPIKDTARVISSMCDMAMLRVNRHETLEEFAKFSQNPVINGLSDKFHPVQLMADYLTMRERGSGEKIAYIGDGNNMAHSWLMLASKLGLELRIATPKGYEPDAKILEKAQQNAKISGAKIYLSNEPKEAVSGADVVTTDTWVSMGQEAQKEKRLREFAGFCVDENLMSLAAKNAIFLHCLPAYRGYEVSEAVFEAHADEIFAEAQNRLHAQKGVMVWLNDKR.

Carbamoyl phosphate contacts are provided by residues 51-54 (STRT), Q78, R102, and 129-132 (HPVQ). L-ornithine contacts are provided by residues N157, D221, and 225–226 (SM). Residues 261-262 (CL) and R289 each bind carbamoyl phosphate.

This sequence belongs to the aspartate/ornithine carbamoyltransferase superfamily. OTCase family.

It is found in the cytoplasm. The enzyme catalyses carbamoyl phosphate + L-ornithine = L-citrulline + phosphate + H(+). It participates in amino-acid degradation; L-arginine degradation via ADI pathway; carbamoyl phosphate from L-arginine: step 2/2. In terms of biological role, reversibly catalyzes the transfer of the carbamoyl group from carbamoyl phosphate (CP) to the N(epsilon) atom of ornithine (ORN) to produce L-citrulline. The chain is Ornithine carbamoyltransferase from Campylobacter curvus (strain 525.92).